A 178-amino-acid polypeptide reads, in one-letter code: CDP-archaeol synthase (178 aa).

Helical transmembrane passes span 3–23, 56–76, 91–111, 131–151, and 152–172; these read LLLLLFSALWYILPAYVANAV, FFGILFGIITGILQHFIVILY, IILSFLLATGALFGDMLGSFI, FIIFALLFAYSLYPVPANIIV, and LLLVISPIIHFSSNIIAYKLH.

The protein belongs to the CDP-archaeol synthase family. Requires Mg(2+) as cofactor.

It is found in the cell membrane. It catalyses the reaction 2,3-bis-O-(geranylgeranyl)-sn-glycerol 1-phosphate + CTP + H(+) = CDP-2,3-bis-O-(geranylgeranyl)-sn-glycerol + diphosphate. It participates in membrane lipid metabolism; glycerophospholipid metabolism. In terms of biological role, catalyzes the formation of CDP-2,3-bis-(O-geranylgeranyl)-sn-glycerol (CDP-archaeol) from 2,3-bis-(O-geranylgeranyl)-sn-glycerol 1-phosphate (DGGGP) and CTP. This reaction is the third ether-bond-formation step in the biosynthesis of archaeal membrane lipids. The sequence is that of CDP-archaeol synthase from Methanococcus maripaludis (strain DSM 14266 / JCM 13030 / NBRC 101832 / S2 / LL).